A 627-amino-acid chain; its full sequence is MDLISVLPSTSKSCVCMHKPLSSSTHKLKPFCRTIRILGMPRPRKSVLMASSMSMSVNTLVSDDDIQRRTGGYHSNLWNDDVIQFLSTPYGELAYRERGERLIDEVRDIFSSMSLEDGEFSDLIQRLWMVDNVERLGIDRHFKNEIKSALDYVYSYWSEKGIGCGTKSIITNLNSTALGFRTLPLHGYPVSADVLKHFRNQIGQFVSCPSETEEDIRSMVNLYRASLIAFPGEEVMEEAESFSEKYLKETLQKIPDCSLSREIGDVLEHGWHTNLPRFEARNYIDVFGQDTKNMESNRKTEKLLELAKLEFNIFQSIQKTELESLLRWWNDSGSPQITFTRHRHVEYYTLASCIAFEPQHSGFRLGFAKACHIITVLDDMYDLFGTVEELKLFTAAIKRWDPSATDCLPQYMKGIYMMVYNTVNEMSAEAQKAQGRDTLNYARQAWEVYLDSYMQEAKWIATGYLPTFEEYLENGKVSSGHRVSALQPMLTMDIPFPPHILKEVDFPSNLNDLACAILRLRGDTRCYQEDRARGEETSCISCYMIDNPGATEEDALNHLNVMISGVIKELNWELLKPDSSVPISSKKINFDITRAFHYGYKYRDGYSVSSVETKSLVMRTLLEPVPL.

The transit peptide at 1 to 50 directs the protein to the chloroplast; sequence MDLISVLPSTSKSCVCMHKPLSSSTHKLKPFCRTIRILGMPRPRKSVLMA. Mg(2+)-binding residues include Asp378, Asp382, and Asp530. A DDXXD motif motif is present at residues 378–382; that stretch reads DDMYD.

This sequence belongs to the terpene synthase family. Tpsd subfamily. Mg(2+) serves as cofactor. It depends on Mn(2+) as a cofactor.

It is found in the plastid. The protein localises to the chloroplast. It functions in the pathway terpene metabolism; oleoresin biosynthesis. It participates in secondary metabolite biosynthesis; terpenoid biosynthesis. Its function is as follows. Monoterpene synthase (TPS) involved in the biosynthesis of monoterpene natural products included in conifer oleoresin secretions and volatile emissions; these compounds contribute to biotic and abiotic stress defense against herbivores and pathogens. This is Monoterpene synthase like 1, chloroplastic from Pinus contorta (Shore pine).